A 332-amino-acid polypeptide reads, in one-letter code: Cinnamoyl-CoA reductase 2 (332 aa).

NADP(+)-binding positions include 12-18 (GAGGYIA), Arg-37, Lys-43, 63-64 (DL), 83-85 (TAS), Tyr-156, Lys-160, 183-186 (PVLV), and Ser-198. Cys-149 and Cys-157 are joined by a disulfide. The active-site Proton donor is Lys-160.

It belongs to the NAD(P)-dependent epimerase/dehydratase family. Dihydroflavonol-4-reductase subfamily. In terms of tissue distribution, expressed at low levels in leaves, stems and flowers.

The enzyme catalyses (E)-cinnamaldehyde + NADP(+) + CoA = (E)-cinnamoyl-CoA + NADPH + H(+). It participates in aromatic compound metabolism; phenylpropanoid biosynthesis. Cinnamoyl-CoA reductase probably involved in the formation of phenolic compounds associated with the hypersensitive response. Seems not to be involved in lignin biosynthesis. The polypeptide is Cinnamoyl-CoA reductase 2 (CCR2) (Arabidopsis thaliana (Mouse-ear cress)).